A 437-amino-acid polypeptide reads, in one-letter code: Enolase (437 aa).

Q162 contacts (2R)-2-phosphoglycerate. Catalysis depends on E204, which acts as the Proton donor. Mg(2+)-binding residues include D251, E297, and D324. (2R)-2-phosphoglycerate contacts are provided by K349, R378, S379, and K400. K349 acts as the Proton acceptor in catalysis.

The protein belongs to the enolase family. It depends on Mg(2+) as a cofactor.

The protein localises to the cytoplasm. It is found in the secreted. The protein resides in the cell surface. It carries out the reaction (2R)-2-phosphoglycerate = phosphoenolpyruvate + H2O. It participates in carbohydrate degradation; glycolysis; pyruvate from D-glyceraldehyde 3-phosphate: step 4/5. In terms of biological role, catalyzes the reversible conversion of 2-phosphoglycerate (2-PG) into phosphoenolpyruvate (PEP). It is essential for the degradation of carbohydrates via glycolysis. This chain is Enolase, found in Chlorobium phaeobacteroides (strain DSM 266 / SMG 266 / 2430).